Here is a 264-residue protein sequence, read N- to C-terminus: Putative ankyrin repeat domain-containing protein 19 (264 aa).

5 ANK repeats span residues 67 to 96 (KDRTVLHLTCAHGRVEVVTLLLSRRCQINI), 100 to 129 (LNRTPLMKAVHCQEEACAIILLEHGANPNI), 133 to 162 (YSNTALHYAVYNKGTSLAEKLLSHHANIEA), 166 to 195 (EGNTPLLFAINSRRQQIVEFLLKNQANLHA), and 199 to 228 (FRRTALMLAVQHNSSSIVSLLLQQNINIFS).

This Homo sapiens (Human) protein is Putative ankyrin repeat domain-containing protein 19 (ANKRD19P).